The chain runs to 633 residues: Protein CASP (633 aa).

Residues 1 to 601 (MAVASEALLQ…LLFSRATRGL (601 aa)) are Cytoplasmic-facing. Residues 39 to 60 (QKTSLDERKELSSKTKEFRKQP) are disordered. Coiled coils occupy residues 111 to 339 (IEAA…LANK) and 369 to 433 (SLES…VDVE). The chain crosses the membrane as a helical; Anchor for type IV membrane protein span at residues 602–622 (FFMYLILLHLFIMIVLLKLGI). At 623–633 (AGNTAYTPMNY) the chain is on the lumenal side.

Belongs to the CASP family.

The protein localises to the golgi apparatus membrane. Its function is as follows. May be involved in intra-Golgi transport. The polypeptide is Protein CASP (coy1) (Schizosaccharomyces pombe (strain 972 / ATCC 24843) (Fission yeast)).